A 771-amino-acid chain; its full sequence is PH and SEC7 domain-containing protein 2 (771 aa).

Disordered stretches follow at residues 1–67 and 107–136; these read MEED…PDVA and GDNA…VRDG. A compositionally biased stretch (basic and acidic residues) spans 47–66; sequence GHERRGTPADTEEPTKDPDV. Residue serine 191 is modified to Phosphoserine. Disordered stretches follow at residues 207 to 230 and 244 to 307; these read GDMG…SSSR and PNGF…ANGC. Low complexity predominate over residues 218 to 230; sequence LGSPLRRSISSSR. The span at 257-266 shows a compositional bias: acidic residues; the sequence is GDEDDDEEDT. Residues 260 to 462 form the SEC7 domain; sequence DDDEEDTDKL…KTLYNSIKNE (203 aa). Positions 288 to 299 are enriched in low complexity; sequence ELSSSEGLEPGS. In terms of domain architecture, PH spans 512–625; the sequence is TTYKHGVLTR…WILRINLVAA (114 aa). A helical membrane pass occupies residues 622–639; sequence LVAAIFSAPAFPAAVSSM. A coiled-coil region spans residues 651–680; it reads TTRLCQEEQLRSHENKLRQLTAELAEHRCH. The disordered stretch occupies residues 739–771; the sequence is DDPSLRKTHSSPALSQGHVTGSKTTKDATGPDT. The segment covering 748–761 has biased composition (polar residues); that stretch reads SSPALSQGHVTGSK.

It belongs to the PSD family.

The protein localises to the cell membrane. It is found in the cell projection. The protein resides in the ruffle membrane. It localises to the cleavage furrow. The polypeptide is PH and SEC7 domain-containing protein 2 (PSD2) (Homo sapiens (Human)).